Consider the following 253-residue polypeptide: uncharacterized protein (253 aa).

Residues M1–G19 form the signal peptide. Residue C20 is the site of N-palmitoyl cysteine attachment. Residue C20 is the site of S-diacylglycerol cysteine attachment.

Belongs to the staphylococcal tandem lipoprotein family.

The protein resides in the cell membrane. This is an uncharacterized protein from Staphylococcus epidermidis (strain ATCC 35984 / DSM 28319 / BCRC 17069 / CCUG 31568 / BM 3577 / RP62A).